A 179-amino-acid polypeptide reads, in one-letter code: Guanosine-3',5'-bis(diphosphate) 3'-pyrophosphohydrolase MESH1 (179 aa).

At Gly2 the chain carries N-acetylglycine. Lys25 carries the N6-acetyllysine modification. The region spanning 32–127 is the HD domain; sequence YINHPIGVAR…VKLADKLYNL (96 aa). Positions 35, 61, and 62 each coordinate Mn(2+). Residues Glu65 and Asp66 each act as nucleophile in the active site. At Lys97 the chain carries N6-acetyllysine. Residue Asp122 participates in Mn(2+) binding. Residue Lys123 is modified to N6-acetyllysine.

This sequence belongs to the MESH1 family. The cofactor is Mn(2+).

It carries out the reaction guanosine 3',5'-bis(diphosphate) + H2O = GDP + diphosphate + H(+). PpGpp hydrolyzing enzyme involved in starvation response. This is Guanosine-3',5'-bis(diphosphate) 3'-pyrophosphohydrolase MESH1 (HDDC3) from Homo sapiens (Human).